The sequence spans 569 residues: Urease subunit beta (569 aa).

A Urease domain is found at 131–569 (GGIDTHIHFI…VSLAQLFSIF (439 aa)). His136, His138, and Lys219 together coordinate Ni(2+). An N6-carboxylysine modification is found at Lys219. His221 contributes to the substrate binding site. Residues His248 and His274 each contribute to the Ni(2+) site. His322 (proton donor) is an active-site residue. Asp362 provides a ligand contact to Ni(2+).

Belongs to the metallo-dependent hydrolases superfamily. Urease alpha subunit family. As to quaternary structure, heterohexamer of 3 UreA (alpha) and 3 UreB (beta) subunits. Requires Ni cation as cofactor. Post-translationally, carboxylation allows a single lysine to coordinate two nickel ions.

It is found in the cytoplasm. The enzyme catalyses urea + 2 H2O + H(+) = hydrogencarbonate + 2 NH4(+). It participates in nitrogen metabolism; urea degradation; CO(2) and NH(3) from urea (urease route): step 1/1. The protein is Urease subunit beta of Helicobacter pylori (strain P12).